We begin with the raw amino-acid sequence, 187 residues long: MNRGKALQLVKPHLTEHRYQHTIGVMETAIDLAKLYGADQQKAELAAIFHDYAKFRDKNEMRTLIREKLSQQDILFYGDELLHAPCGAYYVREEVGIEDEDVLQAIRFHTTGRPNMSLLEKIIFLADYIEPNRQFPGVEKVRTQAKTDLNGAIISSLVNTITFLLKKNQPIYPDTLATYNQLLLEQK.

The region spanning 18 to 132 (RYQHTIGVME…IFLADYIEPN (115 aa)) is the HD domain. His21 is an ADP binding site. Fe cation is bound by residues His21, His50, and Asp51. Residues 51-54 (DYAK), His83, 109-110 (HT), Asp127, Arg133, and 170-175 (PIYPDT) contribute to the ADP site. A Fe cation-binding site is contributed by Asp127.

Belongs to the Ap4A hydrolase YqeK family. Homodimer.

It carries out the reaction P(1),P(4)-bis(5'-adenosyl) tetraphosphate + H2O = 2 ADP + 2 H(+). Hydrolyzes diadenosine 5',5'''-P1,P4-tetraphosphate (Ap4A) to yield ADP. This chain is Bis(5'-nucleosyl)-tetraphosphatase, symmetrical, found in Halalkalibacterium halodurans (strain ATCC BAA-125 / DSM 18197 / FERM 7344 / JCM 9153 / C-125) (Bacillus halodurans).